The following is a 200-amino-acid chain: Recombination protein RecR (200 aa).

The segment at 57–72 (CNECRTFTEEDVCHIC) adopts a C4-type zinc-finger fold. The region spanning 81-176 (GLLCVVESPA…DASRIAHGVP (96 aa)) is the Toprim domain.

This sequence belongs to the RecR family.

May play a role in DNA repair. It seems to be involved in an RecBC-independent recombinational process of DNA repair. It may act with RecF and RecO. The chain is Recombination protein RecR from Vibrio vulnificus (strain CMCP6).